The following is a 102-amino-acid chain: Putative septation protein SpoVG (102 aa).

The tract at residues 83–102 (TDEVIPDKNATSDNEESDEA) is disordered.

It belongs to the SpoVG family.

Its function is as follows. Could be involved in septation. In Staphylococcus epidermidis (strain ATCC 35984 / DSM 28319 / BCRC 17069 / CCUG 31568 / BM 3577 / RP62A), this protein is Putative septation protein SpoVG.